The sequence spans 160 residues: Transcriptional repressor NrdR (160 aa).

A zinc finger lies at Cys-3–Cys-34. The ATP-cone domain occupies Leu-49–Val-139.

The protein belongs to the NrdR family. Zn(2+) is required as a cofactor.

Functionally, negatively regulates transcription of bacterial ribonucleotide reductase nrd genes and operons by binding to NrdR-boxes. The sequence is that of Transcriptional repressor NrdR from Exiguobacterium sibiricum (strain DSM 17290 / CCUG 55495 / CIP 109462 / JCM 13490 / 255-15).